Reading from the N-terminus, the 420-residue chain is Membrane protein UL43 homolog (420 aa).

11 consecutive transmembrane segments (helical) span residues 58–78, 81–101, 114–134, 157–177, 181–201, 203–223, 278–298, 312–332, 343–363, 364–384, and 399–419; these read IFSIAAHLAITLSCITLIQFI, KIIYINCTIYAITGFLIAFIV, IGKPAQFIFALISSIADTLIT, LMCFVMLGAFIASYHYVCLAT, LTWKAGFLILTAGTIIGISAP, GNISSLFGFLFLYTILAINVV, QIPMVVMSHATGVLIPVVIAL, TDMLQGVCGVLVGASVSIFIP, IIILLSIIGAMAITLAGFGLV, LGPTLFSACAAALSCYTCINI, and VVKSILGFIITSLLVCILVAL.

This sequence belongs to the alphaherpesvirinae HHV-1 UL43 family.

It is found in the host membrane. The chain is Membrane protein UL43 homolog (MDV056) from Gallus gallus (Chicken).